Reading from the N-terminus, the 205-residue chain is GTP cyclohydrolase-2 (205 aa).

49-53 (RLHSE) is a GTP binding site. 3 residues coordinate Zn(2+): cysteine 54, cysteine 65, and cysteine 67. Residues glutamine 70, 92 to 94 (EGR), and threonine 114 contribute to the GTP site. The Proton acceptor role is filled by aspartate 126. Arginine 128 serves as the catalytic Nucleophile. 2 residues coordinate GTP: threonine 149 and lysine 154.

Belongs to the GTP cyclohydrolase II family. It depends on Zn(2+) as a cofactor.

The enzyme catalyses GTP + 4 H2O = 2,5-diamino-6-hydroxy-4-(5-phosphoribosylamino)-pyrimidine + formate + 2 phosphate + 3 H(+). Its pathway is cofactor biosynthesis; riboflavin biosynthesis; 5-amino-6-(D-ribitylamino)uracil from GTP: step 1/4. Its function is as follows. Catalyzes the conversion of GTP to 2,5-diamino-6-ribosylamino-4(3H)-pyrimidinone 5'-phosphate (DARP), formate and pyrophosphate. This is GTP cyclohydrolase-2 from Pseudomonas aeruginosa (strain LESB58).